The following is a 697-amino-acid chain: Transmembrane protein 168 (697 aa).

A run of 3 helical transmembrane segments spans residues 36-56 (LGYL…YVRW), 63-83 (LILV…ILYY), and 89-109 (AASL…LCFL). The N-linked (GlcNAc...) asparagine glycan is linked to N111. 7 helical membrane-spanning segments follow: residues 172–192 (MLVE…MLII), 199–219 (FLAI…SLET), 223–243 (PIAF…DIYF), 265–285 (LSVV…AFKL), 293–313 (FVIP…IIFL), 352–372 (FCLI…ILGA), and 380–400 (GIFL…HGLF). Residues N533 and N598 are each glycosylated (N-linked (GlcNAc...) asparagine). The helical transmembrane segment at 646–666 (ITYPLVHLANWLCGLNLFWIC) threads the bilayer.

This sequence belongs to the TMEM168 family.

Its subcellular location is the nucleus membrane. In terms of biological role, plays a key role in maintaining the cardiac electrical stability by modulating cell surface expression of SCN5A. May play a role in the modulation of anxiety behavior by regulating GABAergic neuronal system in the nucleus accumbens. This is Transmembrane protein 168 from Homo sapiens (Human).